A 316-amino-acid polypeptide reads, in one-letter code: L-lactate dehydrogenase 3 (316 aa).

The NAD(+) site is built by V16, D37, R42, and Y68. R91 provides a ligand contact to substrate. NAD(+) is bound by residues S104, 121-123 (ASN), and T146. 123–126 (NPVD) is a binding site for substrate. Substrate is bound at residue 151-154 (DSSR). The beta-D-fructose 1,6-bisphosphate site is built by R156 and H171. H178 serves as the catalytic Proton acceptor. T233 serves as a coordination point for substrate.

It belongs to the LDH/MDH superfamily. LDH family. Homotetramer.

Its subcellular location is the cytoplasm. It catalyses the reaction (S)-lactate + NAD(+) = pyruvate + NADH + H(+). The protein operates within fermentation; pyruvate fermentation to lactate; (S)-lactate from pyruvate: step 1/1. Allosterically activated by fructose 1,6-bisphosphate (FBP). Its function is as follows. Catalyzes the conversion of lactate to pyruvate. This Bacillus cereus (strain ATCC 14579 / DSM 31 / CCUG 7414 / JCM 2152 / NBRC 15305 / NCIMB 9373 / NCTC 2599 / NRRL B-3711) protein is L-lactate dehydrogenase 3.